The chain runs to 261 residues: uncharacterized protein (261 aa).

Positions 1–22 (MKSIKRIGLCISLLILIIFVTS) are cleaved as a signal peptide. A lipid anchor (N-palmitoyl cysteine) is attached at C23. A lipid anchor (S-diacylglycerol cysteine) is attached at C23.

The protein belongs to the staphylococcal tandem lipoprotein family.

It localises to the cell membrane. This is an uncharacterized protein from Staphylococcus aureus (strain USA300).